Consider the following 295-residue polypeptide: Mycothiol acetyltransferase (295 aa).

2 N-acetyltransferase domains span residues 4-138 (TEWR…RPLT) and 149-295 (VRIA…YAAN). Residue D36 coordinates 1D-myo-inositol 2-(L-cysteinylamino)-2-deoxy-alpha-D-glucopyranoside. Acetyl-CoA is bound by residues 77-79 (LVV) and 85-90 (RRGIGA). 1D-myo-inositol 2-(L-cysteinylamino)-2-deoxy-alpha-D-glucopyranoside-binding residues include E176, K217, and E225. Acetyl-CoA contacts are provided by residues 229 to 231 (VGV) and 236 to 242 (QGRGLGY). A 1D-myo-inositol 2-(L-cysteinylamino)-2-deoxy-alpha-D-glucopyranoside-binding site is contributed by Y266. 271 to 276 (NSAAVN) contacts acetyl-CoA.

Belongs to the acetyltransferase family. MshD subfamily. Monomer.

The enzyme catalyses 1D-myo-inositol 2-(L-cysteinylamino)-2-deoxy-alpha-D-glucopyranoside + acetyl-CoA = mycothiol + CoA + H(+). In terms of biological role, catalyzes the transfer of acetyl from acetyl-CoA to desacetylmycothiol (Cys-GlcN-Ins) to form mycothiol. The chain is Mycothiol acetyltransferase (mshD) from Mycolicibacterium smegmatis (strain ATCC 700084 / mc(2)155) (Mycobacterium smegmatis).